The chain runs to 243 residues: HTH-type transcriptional regulator MlrA (243 aa).

In terms of domain architecture, HTH merR-type spans 3-72 (LYTIGEVALL…VSKVKVLLSS (70 aa)). A DNA-binding region (H-T-H motif) is located at residues 6–25 (IGEVALLCDINPVTLRAWQR).

Transcriptional activator of csgD, which is required for production of the curli (AgF). The protein is HTH-type transcriptional regulator MlrA of Salmonella typhimurium (strain SL1344).